Consider the following 270-residue polypeptide: Tetracenomycin polyketide synthesis O-methyltransferase TcmP (270 aa).

The protein operates within antibiotic biosynthesis; tetracenomycin C biosynthesis. In terms of biological role, O-methyltransferase that catalyzes the methylation of the C-9 carboxy group of tetracenomycin E (TCM E) to yield TCM A2. Catalyzes as well the following side reactions: methylation of 8-O-methyl-TCM D3 to 9-carboxymethyl-8-O-methyl-TCM D3; and of TCM B3 to 9-carboxymethyl-TCM B3. This Streptomyces glaucescens protein is Tetracenomycin polyketide synthesis O-methyltransferase TcmP (tcmP).